We begin with the raw amino-acid sequence, 507 residues long: Maturase K (507 aa).

The protein belongs to the intron maturase 2 family. MatK subfamily.

The protein localises to the plastid. It is found in the chloroplast. Functionally, usually encoded in the trnK tRNA gene intron. Probably assists in splicing its own and other chloroplast group II introns. This is Maturase K from Kalmia procumbens (Alpine azalea).